We begin with the raw amino-acid sequence, 4454 residues long: E3 ubiquitin-protein ligase HUWE1 (4454 aa).

Residues 521–575 (RASSSNSSTSISGPGPGPGPGPGPGPGPGPGPGPGPGLGPSLGPGPGPGPRPGVQ) form a disordered region. A compositionally biased stretch (low complexity) spans 523–533 (SSSNSSTSISG). Over residues 535–571 (GPGPGPGPGPGPGPGPGPGPGPGLGPSLGPGPGPGPR) the composition is skewed to pro residues. Phosphoserine is present on residues S724 and S725. 3 disordered regions span residues 781-834 (QKAD…VVGT), 1054-1077 (DEKA…AGSM), and 1094-1114 (TLAP…KSKI). Over residues 801–811 (ASSEDEEEEEV) the composition is skewed to acidic residues. The span at 813–832 (AMQSFNSAQQNETEPNQQVV) shows a compositional bias: polar residues. At S816 the chain carries Phosphoserine. S1160 carries the post-translational modification Phosphoserine. Positions 1367-1378 (LSKEKEGSRGEE) are enriched in basic and acidic residues. The segment at 1367–1396 (LSKEKEGSRGEEEAGQEEGGSRREPQVNQQ) is disordered. Residues 1392–1431 (QVNQQQLQQLMDMGFTREHAMEALLNTSTMEQATEYLLTH) form the UBA domain. A phosphoserine mark is found at S1444, S1446, S1458, and S1471. In terms of domain architecture, UIM spans 1446-1465 (SEEDQMMRAIAMSLGQDIPM). A disordered region spans residues 1472 to 1491 (PEEVACRKEEEERKAREKQE). The region spanning 1679 to 1756 (RAQMTKYLQS…ETGNRRPVML (78 aa)) is the WWE domain. Residues 1766 to 1802 (KNSKSSNGQELEKTLEESKETDIKRKENKGNDIPLAL) form a disordered region. Positions 1775–1795 (ELEKTLEESKETDIKRKENKG) are enriched in basic and acidic residues. Position 1983 is a phosphoserine (S1983). Disordered stretches follow at residues 2095–2142 (APAE…SKPL), 2339–2420 (SLFG…QEMQ), and 2433–2556 (LERD…ASPL). The span at 2097–2112 (AETSTTGTSQGEGAST) shows a compositional bias: low complexity. Position 2112 is a phosphothreonine (T2112). The span at 2114–2134 (EETREGKKDKEGDRTSEEGKQ) shows a compositional bias: basic and acidic residues. Low complexity predominate over residues 2339–2368 (SLFGSKSASSKSKSEQDAQGASQDSSSHQQ). S2343 is subject to Phosphoserine. K2344 carries the post-translational modification N6-acetyllysine. Composition is skewed to acidic residues over residues 2372–2383 (EPGEAEVQEEDH) and 2391–2402 (ADGDIMDGEAET). Phosphoserine occurs at positions 2439, 2442, and 2468. Residues 2465–2475 (SNLSQASTLQA) are compositionally biased toward polar residues. Acidic residues predominate over residues 2485–2549 (DPEDEEEHTQ…SEMELDEDYP (65 aa)). S2604, S2609, and S2612 each carry phosphoserine. A Phosphothreonine modification is found at T2631. Residues S2661, S2672, and S2696 each carry the phosphoserine modification. The span at 2781–2793 (IIDKGKEDKENRD) shows a compositional bias: basic and acidic residues. Disordered stretches follow at residues 2781–3047 (IIDK…GVDP) and 3113–3136 (QQRA…MDPV). The span at 2794 to 2813 (QSAQCTVSKTNDSTEQNVSD) shows a compositional bias: polar residues. Low complexity predominate over residues 2815–2849 (TPMPDSYPTTPSSTDAPTSESKETLGTLQPSQQQP). T2828 is modified (phosphothreonine). Polar residues-rich tracts occupy residues 2895–2912 (AETT…TSLS), 2924–2941 (AVSS…SLAS), and 2954–2967 (AGSS…SSTP). A phosphoserine mark is found at S2903, S2910, S2912, S2938, S2964, and S2965. At T2966 the chain carries Phosphothreonine. Residues 2990–3009 (PPEDSSPPASSESSSTRDSA) are compositionally biased toward low complexity. The residue at position 2995 (S2995) is a Phosphoserine. S3193, S3194, S3199, S3204, and S3212 each carry phosphoserine. Residue R3226 is modified to Omega-N-methylarginine. Disordered stretches follow at residues 3320 to 3343 (PKLS…SHEN), 3431 to 3458 (QRTK…SQSS), 3482 to 3501 (GKNS…ETSL), 3548 to 3590 (SEVQ…TTPV), and 3615 to 3642 (TPTT…EGGS). The segment covering 3432–3446 (RTKETNCESDRERGS) has biased composition (basic and acidic residues). The segment covering 3447-3458 (KQACSPCSSQSS) has biased composition (low complexity). Low complexity-rich tracts occupy residues 3552–3579 (TNSS…ATAP) and 3615–3628 (TPTT…TSTT). Phosphoserine occurs at positions 3633, 3740, 3830, 3835, 3837, and 3838. The interval 3815 to 3836 (TRRANKKAKQTGRLGSSGLGSA) is disordered. Positions 3826-3836 (GRLGSSGLGSA) are enriched in low complexity. Disordered regions lie at residues 3859–3927 (EGQR…LPLL) and 3974–4028 (RESK…SSSL). A compositionally biased stretch (polar residues) spans 3871-3880 (TSESSNQSET). A phosphoserine mark is found at S3887, S3895, and S3907. A compositionally biased stretch (polar residues) spans 3894–3905 (PSPSAQDTQSIV). Phosphothreonine is present on T3910. Basic and acidic residues-rich tracts occupy residues 3913 to 3922 (GEKEKEERPP) and 3974 to 3995 (RESK…KDEP). S3986 and S3999 each carry phosphoserine. Pro residues predominate over residues 3996–4005 (PPLSPAPLTP). 2 positions are modified to phosphothreonine: T4004 and T4007. The span at 4018–4028 (EPSSMHISSSL) shows a compositional bias: polar residues. Residues 4118-4454 (SPEEMKNRLY…QECSEGFGLA (337 aa)) form the HECT domain. A Phosphotyrosine modification is found at Y4351. C4421 serves as the catalytic Glycyl thioester intermediate.

This sequence belongs to the UPL family. TOM1/PTR1 subfamily. Interacts with isoform p14ARF of CDKN2A which strongly inhibits HUWE1 ubiquitin ligase activity. Interacts with MYCN, POLB and CDC6. Interacts with isoform 2 of PA2G4. Interacts with NR1D1. Interacts with AMBRA1. Interacts with HAPSTR1. Interacts with HAPSTR2. In hepatocytes, interacts with PAQR3; the interaction promotes PPARA poylubiquitination and STUB1-mediated degradation. In terms of processing, phosphorylated on tyrosine, phosphorylation is probably required for its ability to inhibit TP53 transactivation. Widely expressed.

It localises to the cytoplasm. Its subcellular location is the nucleus. The protein resides in the mitochondrion. The catalysed reaction is S-ubiquitinyl-[E2 ubiquitin-conjugating enzyme]-L-cysteine + [acceptor protein]-L-lysine = [E2 ubiquitin-conjugating enzyme]-L-cysteine + N(6)-ubiquitinyl-[acceptor protein]-L-lysine.. Its pathway is protein modification; protein ubiquitination. Functionally, E3 ubiquitin-protein ligase which mediates ubiquitination and subsequent proteasomal degradation of target proteins. Regulates apoptosis by catalyzing the polyubiquitination and degradation of MCL1. Mediates monoubiquitination of DNA polymerase beta (POLB) at 'Lys-41', 'Lys-61' and 'Lys-81', thereby playing a role in base-excision repair. Also ubiquitinates the p53/TP53 tumor suppressor and core histones including H1, H2A, H2B, H3 and H4. Ubiquitinates MFN2 to negatively regulate mitochondrial fusion in response to decreased stearoylation of TFRC. Ubiquitination of MFN2 also takes place following induction of mitophagy; AMBRA1 acts as a cofactor for HUWE1-mediated ubiquitination. Regulates neural differentiation and proliferation by catalyzing the polyubiquitination and degradation of MYCN. May regulate abundance of CDC6 after DNA damage by polyubiquitinating and targeting CDC6 to degradation. Mediates polyubiquitination of PA2G4. Acts in concert with MYCBP2 to regulate the circadian clock gene expression by promoting the lithium-induced ubiquination and degradation of NR1D1. Binds to an upstream initiator-like sequence in the preprodynorphin gene. Mediates HAPSTR1 degradation, but is also a required cofactor in the pathway by which HAPSTR1 governs stress signaling. Acts as a regulator of the JNK and NF-kappa-B signaling pathways by mediating assembly of heterotypic 'Lys-63'-/'Lys-48'-linked branched ubiquitin chains that are then recognized by TAB2: HUWE1 mediates branching of 'Lys-48'-linked chains of substrates initially modified with 'Lys-63'-linked conjugates by TRAF6. 'Lys-63'-/'Lys-48'-linked branched ubiquitin chains protect 'Lys-63'-linkages from CYLD deubiquitination. Ubiquitinates PPARA in hepatocytes. The chain is E3 ubiquitin-protein ligase HUWE1 (Huwe1) from Rattus norvegicus (Rat).